Reading from the N-terminus, the 1313-residue chain is Kinesin-like protein KIN-12B (1313 aa).

The segment at 1 to 74 (MKHFMMPRNA…PPRPPSSNPL (74 aa)) is disordered. A compositionally biased stretch (polar residues) spans 17-26 (ESQSPNPSLT). One can recognise a Kinesin motor domain in the interval 96–431 (GVKVIVRMKP…LRFAQRAKAI (336 aa)). 170 to 177 (GQTGSGKT) is an ATP binding site. Microtubules-binding regions lie at residues 298–302 (SSRSH), 331–337 (VDLAGSE), and 380–384 (HIPYR). The neck stretch occupies residues 429 to 467 (KAIQNKAIVNEVMQDDVNFLREVIRQLRDELQRVKDDKG). Residues 685 to 709 (ESASPKIRNSRKSLRTTSMSTASQK) are disordered. Polar residues predominate over residues 699 to 708 (RTTSMSTASQ). 3 coiled-coil regions span residues 932-1003 (LDEE…YTDS), 1062-1130 (AEEL…RIRE), and 1167-1241 (EKEV…TEIS).

The protein belongs to the TRAFAC class myosin-kinesin ATPase superfamily. Kinesin family. KIN-12 subfamily. In terms of assembly, homodimer and heterodimer with KIN12A. Interacts with TIO.

It localises to the cytoplasm. Its subcellular location is the cytoskeleton. It is found in the phragmoplast. Its function is as follows. Plus-end directed kinesin-like motor enzyme that plays a critical role in the organization of phragmoplast microtubules during cytokinesis. Constitutes a signaling module in association with serine/threonine-protein kinase TIO that is required to support phragmoplast expansion and cell-plate growth in plant cells. This is Kinesin-like protein KIN-12B from Arabidopsis thaliana (Mouse-ear cress).